Reading from the N-terminus, the 72-residue chain is Gas vesicle protein A (72 aa).

The protein belongs to the gas vesicle GvpA family. The gas vesicle shell is 2 nm thick and consists of a single layer of this protein. It forms helical ribs nearly perpendicular to the long axis of the vesicle.

The protein localises to the gas vesicle shell. Functionally, gas vesicles are hollow, gas filled proteinaceous nanostructures found in some microorganisms. During planktonic growth they allow positioning of the organism at a favorable depth for light or nutrient acquisition. GvpA forms the protein shell. In Haloquadratum walsbyi (strain DSM 16790 / HBSQ001), this protein is Gas vesicle protein A.